The sequence spans 378 residues: Queuine tRNA-ribosyltransferase (378 aa).

Catalysis depends on aspartate 89, which acts as the Proton acceptor. Substrate is bound by residues 89-93, aspartate 143, glutamine 187, and glycine 214; that span reads DSGGF. Residues 245–251 are RNA binding; that stretch reads GVGKPED. Aspartate 264 functions as the Nucleophile in the catalytic mechanism. The RNA binding; important for wobble base 34 recognition stretch occupies residues 269 to 273; sequence TRNAR. Zn(2+) is bound by residues cysteine 302, cysteine 304, cysteine 307, and histidine 333.

It belongs to the queuine tRNA-ribosyltransferase family. In terms of assembly, homodimer. Within each dimer, one monomer is responsible for RNA recognition and catalysis, while the other monomer binds to the replacement base PreQ1. The cofactor is Zn(2+).

It carries out the reaction 7-aminomethyl-7-carbaguanine + guanosine(34) in tRNA = 7-aminomethyl-7-carbaguanosine(34) in tRNA + guanine. The protein operates within tRNA modification; tRNA-queuosine biosynthesis. Its function is as follows. Catalyzes the base-exchange of a guanine (G) residue with the queuine precursor 7-aminomethyl-7-deazaguanine (PreQ1) at position 34 (anticodon wobble position) in tRNAs with GU(N) anticodons (tRNA-Asp, -Asn, -His and -Tyr). Catalysis occurs through a double-displacement mechanism. The nucleophile active site attacks the C1' of nucleotide 34 to detach the guanine base from the RNA, forming a covalent enzyme-RNA intermediate. The proton acceptor active site deprotonates the incoming PreQ1, allowing a nucleophilic attack on the C1' of the ribose to form the product. After dissociation, two additional enzymatic reactions on the tRNA convert PreQ1 to queuine (Q), resulting in the hypermodified nucleoside queuosine (7-(((4,5-cis-dihydroxy-2-cyclopenten-1-yl)amino)methyl)-7-deazaguanosine). The sequence is that of Queuine tRNA-ribosyltransferase from Aeromonas hydrophila subsp. hydrophila (strain ATCC 7966 / DSM 30187 / BCRC 13018 / CCUG 14551 / JCM 1027 / KCTC 2358 / NCIMB 9240 / NCTC 8049).